Reading from the N-terminus, the 113-residue chain is Vitelline membrane protein Vm32E (113 aa).

A signal peptide spans 1-17 (MKIVAFTLVAFVALAGA). The region spanning 33–70 (GYPAPPCPTNYLFSCQPNLAPVPCAQQAPAYGSAGAYT) is the VM domain.

Belongs to the vitelline membrane family.

The protein resides in the secreted. Major early eggshell protein. This chain is Vitelline membrane protein Vm32E, found in Drosophila erecta (Fruit fly).